Consider the following 115-residue polypeptide: Putative gamma-glutamylcyclotransferase VC_2546 (115 aa).

Residue 8-11 (YGTL) coordinates substrate. Glu-73 acts as the Proton acceptor in catalysis.

Belongs to the gamma-glutamylcyclotransferase family.

In terms of biological role, putative gamma-glutamylcyclotransferase. This chain is Putative gamma-glutamylcyclotransferase VC_2546, found in Vibrio cholerae serotype O1 (strain ATCC 39315 / El Tor Inaba N16961).